Reading from the N-terminus, the 500-residue chain is Cytochrome P450 monooxygenase acrD (500 aa).

The helical transmembrane segment at 13–32 threads the bilayer; sequence PYLSGTNLVWTLLLVGYIIP. N-linked (GlcNAc...) asparagine glycans are attached at residues asparagine 210 and asparagine 414. Cysteine 447 provides a ligand contact to heme.

This sequence belongs to the cytochrome P450 family. Heme serves as cofactor.

The protein resides in the membrane. Its pathway is secondary metabolite biosynthesis. Cytochrome P450 monooxygenase; part of the cluster that mediates the biosynthesis of acurin A, a highly reduced polyketide coupled to a serine via a peptide bond. The activities of the highly reducing polyketide synthase acrA and the nonribosomal peptide synthetase acrB are collectively responsible for the synthesis of the acurin A core structure with a heptaketide backbone produced by acrA covalently fused to a L-serine by acrB. After the formation of the PK-NRP hybrid product, it is detached from acrB by reductive release to set up the formation of the lactam ring by aldol condensation. The hydrolyase acrC then catalyzes water loss to generate a double bond in the ring. This double bond is probably reduced, which is followed by three oxidations at C-22 to generate the carboxylic acid moiety, involving probably the FAD-binding monooxygenase acrE and the cytochrome P450 monooxygenases acrD and acrF. Finally, a last methylation step performed by the O-methyltransferase acrG leads to the production of acurin A. This is Cytochrome P450 monooxygenase acrD from Aspergillus aculeatus (strain ATCC 16872 / CBS 172.66 / WB 5094).